The primary structure comprises 249 residues: Deoxyribose-phosphate aldolase (249 aa).

The Proton donor/acceptor role is filled by aspartate 105. Catalysis depends on lysine 168, which acts as the Schiff-base intermediate with acetaldehyde. Lysine 216 acts as the Proton donor/acceptor in catalysis.

It belongs to the DeoC/FbaB aldolase family. DeoC type 1 subfamily.

Its subcellular location is the cytoplasm. It catalyses the reaction 2-deoxy-D-ribose 5-phosphate = D-glyceraldehyde 3-phosphate + acetaldehyde. The protein operates within carbohydrate degradation; 2-deoxy-D-ribose 1-phosphate degradation; D-glyceraldehyde 3-phosphate and acetaldehyde from 2-deoxy-alpha-D-ribose 1-phosphate: step 2/2. Its function is as follows. Catalyzes a reversible aldol reaction between acetaldehyde and D-glyceraldehyde 3-phosphate to generate 2-deoxy-D-ribose 5-phosphate. The chain is Deoxyribose-phosphate aldolase from Corynebacterium jeikeium (strain K411).